Reading from the N-terminus, the 154-residue chain is SsrA-binding protein (154 aa).

The disordered stretch occupies residues 131–154 (DKRQDLKQKEAKRDIERAFKERQQ). Positions 132-154 (KRQDLKQKEAKRDIERAFKERQQ) are enriched in basic and acidic residues.

Belongs to the SmpB family.

It is found in the cytoplasm. Functionally, required for rescue of stalled ribosomes mediated by trans-translation. Binds to transfer-messenger RNA (tmRNA), required for stable association of tmRNA with ribosomes. tmRNA and SmpB together mimic tRNA shape, replacing the anticodon stem-loop with SmpB. tmRNA is encoded by the ssrA gene; the 2 termini fold to resemble tRNA(Ala) and it encodes a 'tag peptide', a short internal open reading frame. During trans-translation Ala-aminoacylated tmRNA acts like a tRNA, entering the A-site of stalled ribosomes, displacing the stalled mRNA. The ribosome then switches to translate the ORF on the tmRNA; the nascent peptide is terminated with the 'tag peptide' encoded by the tmRNA and targeted for degradation. The ribosome is freed to recommence translation, which seems to be the essential function of trans-translation. This Listeria innocua serovar 6a (strain ATCC BAA-680 / CLIP 11262) protein is SsrA-binding protein.